The primary structure comprises 210 residues: Ribosomal RNA large subunit methyltransferase E (210 aa).

Residues Gly61, Trp63, Asp81, Asp97, and Asp122 each contribute to the S-adenosyl-L-methionine site. Lys162 serves as the catalytic Proton acceptor. Basic and acidic residues predominate over residues 187–196 (KPEASRKRSP). The segment at 187 to 210 (KPEASRKRSPEVYALGQGKRAHMK) is disordered.

It belongs to the class I-like SAM-binding methyltransferase superfamily. RNA methyltransferase RlmE family.

It localises to the cytoplasm. The catalysed reaction is uridine(2552) in 23S rRNA + S-adenosyl-L-methionine = 2'-O-methyluridine(2552) in 23S rRNA + S-adenosyl-L-homocysteine + H(+). Specifically methylates the uridine in position 2552 of 23S rRNA at the 2'-O position of the ribose in the fully assembled 50S ribosomal subunit. The chain is Ribosomal RNA large subunit methyltransferase E from Stenotrophomonas maltophilia (strain R551-3).